The primary structure comprises 373 residues: tRNA (guanine(26)-N(2))-dimethyltransferase (373 aa).

In terms of domain architecture, Trm1 methyltransferase spans Lys-2–Ile-365. Residues Arg-35, Arg-66, Asp-86, Asp-113, and Ala-114 each contribute to the S-adenosyl-L-methionine site.

Belongs to the class I-like SAM-binding methyltransferase superfamily. Trm1 family.

The catalysed reaction is guanosine(26) in tRNA + 2 S-adenosyl-L-methionine = N(2)-dimethylguanosine(26) in tRNA + 2 S-adenosyl-L-homocysteine + 2 H(+). Its function is as follows. Dimethylates a single guanine residue at position 26 of a number of tRNAs using S-adenosyl-L-methionine as donor of the methyl groups. The polypeptide is tRNA (guanine(26)-N(2))-dimethyltransferase (Methanococcus maripaludis (strain C7 / ATCC BAA-1331)).